We begin with the raw amino-acid sequence, 490 residues long: MASVMEDPTLERHFKGHKDVISCADFNPNNKQLATGSCDKSLMIWNLAPKARAFRFVGHTDVITGVNFAPSGSLVASSSRDQTVRLWTPSIKGESTVFKAHTASVRSVHFSRDGQRLVTASDDKSVKVWGVERKKFLYSLNRHTNWVRCARFSPDGRLIASCGDDRTVRLWDTSSHQCINIFTDYGGSATFVDFNSSGTCIASSGADNTIKIWDIRTNKLIQHYKVHNAGVNCFSFHPSGNYLISGSSDSTIKILDLLEGRLIYTLHGHKGPVLTVTFSRDGDLFASGGADSQVLMWKTNFDSLNYRELLSKHSKRVTPDPPPHLMDIYPRSHHRHHPQNGTVEINPVADTQSTDPQVVEVGRVVFSTTDARNYDGASSSRAQFTSGMDSGPFRTHTQAREEEDENQEERFAGGMTASPAERSGIPSSLTSTLENIVQQLDILTQTVAVLEERLTLTEDKLRTCLDNQVLLMQQNQQLDRSDEESEGPPL.

WD repeat units lie at residues 16–55, 58–97, 100–139, 142–181, 184–223, 226–265, and 268–307; these read GHKDVISCADFNPNNKQLATGSCDKSLMIWNLAPKARAFR, GHTDVITGVNFAPSGSLVASSSRDQTVRLWTPSIKGESTV, AHTASVRSVHFSRDGQRLVTASDDKSVKVWGVERKKFLYS, RHTNWVRCARFSPDGRLIASCGDDRTVRLWDTSSHQCINI, DYGGSATFVDFNSSGTCIASSGADNTIKIWDIRTNKLIQH, VHNAGVNCFSFHPSGNYLISGSSDSTIKILDLLEGRLIYT, and GHKGPVLTVTFSRDGDLFASGGADSQVLMWKTNFDSLNYR. Polar residues predominate over residues 375–388; that stretch reads DGASSSRAQFTSGM. Residues 375-427 are disordered; sequence DGASSSRAQFTSGMDSGPFRTHTQAREEEDENQEERFAGGMTASPAERSGIPS. The stretch at 431-463 forms a coiled coil; the sequence is STLENIVQQLDILTQTVAVLEERLTLTEDKLRT.

The protein belongs to the WD repeat POC1 family.

It localises to the cytoplasm. The protein localises to the cytoskeleton. It is found in the microtubule organizing center. Its subcellular location is the centrosome. The protein resides in the centriole. Functionally, plays an important role in centriole assembly and/or stability and ciliogenesis. Involved in early steps of centriole duplication, as well as in the later steps of centriole length control. The sequence is that of POC1 centriolar protein homolog B from Danio rerio (Zebrafish).